Consider the following 165-residue polypeptide: uncharacterized protein (165 aa).

Residues 68 to 107 (LEGAPEWAAPHPEEQRRSPPACSQHTPPLPSTPTGPPPCS) are disordered. The span at 94-107 (PPLPSTPTGPPPCS) shows a compositional bias: pro residues.

This is an uncharacterized protein from Homo sapiens (Human).